We begin with the raw amino-acid sequence, 82 residues long: Escargot/snail protein homolog (82 aa).

4 C2H2-type zinc fingers span residues 1-5 (HQQFH), 18-40 (FSCKNCDKTYVSLGALKMHIRTH), 44-66 (CKCPICGKAFSRPWLLQGHIRTH), and 72-82 (FSCQHCQSAFV).

It belongs to the snail C2H2-type zinc-finger protein family.

It localises to the nucleus. This is Escargot/snail protein homolog from Calliphora vicina (Blue blowfly).